The primary structure comprises 938 residues: MHSPGAGCPALQPDTPGSQPQPMDLRVGQRPTVEPPPEPALLTLQHPQRLHRHLFLAGLHQQQRSAEPMRLSMDPPMPELQGGQQEQELRQLLNKDKSKRSAVASSVVKQKLAEVILKKQQAALERTVHPSSPSIPYRTLEPLDTEGAARSVLSSFLPPVPSLPTEPPEHFPLRKTVSEPNLKLRYKPKKSLERRKNPLLRKESAPPSLRRRPAETLGDSSPSSSSTPASGCSSPNDSEHGPNPALGSEADGDRRTHSTLGPRGPVLGNPHAPLFLHHGLEPEAGGTLPSRLQPILLLDPSVSHAPLWTVPGLGPLPFHFAQPLLTTERLSGSGLHRPLNRTRSEPLPPSATASPLLAPLQPRQDRLKPHVQLIKPAISPPQRPAKPSEKPRLRQIPSAEDLETDGGGVGPMANDGLEHRESGRGPPEGRGSISLQQHQQVPPWEQQHLAGRLSQGSPGDSVLIPLAQVGHRPLSRTQSSPAAPVSLLSPEPTCQTQVLNSSETPATGLVYDSVMLKHQCSCGDNSKHPEHAGRIQSIWSRLQERGLRSQCECLRGRKASLEELQSVHSERHVLLYGTNPLSRLKLDNGKLTGLLAQRTFVMLPCGGVGVDTDTIWNELHSSNAARWAAGSVTDLAFKVASRELKNGFAVVRPPGHHADHSTAMGFCFFNSVAIACRQLQQHGKASKILIVDWDVHHGNGTQQTFYQDPSVLYISLHRHDDGNFFPGSGAVDEVGTGSGEGFNVNVAWAGGLDPPMGDPEYLAAFRIVVMPIAREFAPDLVLVSAGFDAAEGHPAPLGGYHVSAKCFGYMTQQLMNLAGGAVVLALEGGHDLTAICDASEACVAALLGNKVDPLSEESWKQKPNLSAIRSLEAVVRVHRKYWGCMQRLASCPDSWLPRVPGADAEVEAVTALASLSVGILAEDRPSERLVEEEEPMNL.

The tract at residues 1 to 40 (MHSPGAGCPALQPDTPGSQPQPMDLRVGQRPTVEPPPEPA) is disordered. An interaction with MEF2C region spans residues 1-121 (MHSPGAGCPA…LAEVILKKQQ (121 aa)). 2 transcription repression regions span residues 2-254 (HSPG…DGDR) and 241-533 (GPNP…EHAG). The interaction with MEF2A stretch occupies residues 72–172 (SMDPPMPELQ…LPTEPPEHFP (101 aa)). Serine 132 is subject to Phosphoserine. Disordered stretches follow at residues 155–280 (SFLP…HHGL), 331–361 (SGSG…APLQ), 373–463 (LIKP…DSVL), and 472–491 (RPLS…LSPE). Serine 178 carries the phosphoserine; by MARK2, MARK3 and PKD/PRKD1 modification. The span at 190–204 (KSLERRKNPLLRKES) shows a compositional bias: basic and acidic residues. Serine 204 bears the Phosphoserine; by PKD/PRKD2 mark. Residues 220–235 (SSPSSSSTPASGCSSP) show a composition bias toward low complexity. Serine 344 is subject to Phosphoserine; by PKD/PRKD1. Serine 350 and serine 398 each carry phosphoserine. The segment covering 350–361 (SATASPLLAPLQ) has biased composition (low complexity). Composition is skewed to low complexity over residues 429–448 (GRGS…EQQH) and 479–491 (SSPA…LSPE). The residue at position 479 (serine 479) is a Phosphoserine; by PKD/PRKD1. Serine 480 is modified (phosphoserine). The segment at 505–852 (PATGLVYDSV…VAALLGNKVD (348 aa)) is histone deacetylase. Residues cysteine 520, cysteine 522, and histidine 528 each coordinate Zn(2+). The residue at position 582 (serine 582) is a Phosphoserine. Cysteine 605 provides a ligand contact to Zn(2+). Residue histidine 657 is part of the active site. The interval 864–938 (NLSAIRSLEA…LVEEEEPMNL (75 aa)) is interaction with SIN3A. The Nuclear export signal motif lies at 904–938 (AEVEAVTALASLSVGILAEDRPSERLVEEEEPMNL).

The protein belongs to the histone deacetylase family. HD type 2 subfamily. In terms of assembly, interacts with HDAC1, HDAC2, HDAC3, HDAC4, HDAC5, NCOR1, NCOR2, SIN3A, SIN3B, RBBP4, RBBP7, MTA1L1, SAP30 and MBD3. Interacts with KAT5 and EDNRA. Interacts with the 14-3-3 protein YWHAE, MEF2A, MEF2B and MEF2C. Interacts with ZMYND15. Interacts with KDM5B. Interacts with PML. Interacts with FOXP3. Interacts with RARA. May be phosphorylated by CaMK1. Phosphorylated by the PKC kinases PKN1 and PKN2, impairing nuclear import. Phosphorylation at Ser-178 by MARK2, MARK3 and PRKD1 promotes interaction with 14-3-3 proteins and export from the nucleus. Phosphorylation at Ser-178 is a prerequisite for phosphorylation at Ser-204. As to expression, highly expressed in heart and lung. Expressed at intermediate level in muscle.

The protein localises to the nucleus. The protein resides in the cytoplasm. It carries out the reaction N(6)-acetyl-L-lysyl-[histone] + H2O = L-lysyl-[histone] + acetate. The catalysed reaction is N(6)-acetyl-L-lysyl-[protein] + H2O = L-lysyl-[protein] + acetate. Its activity is regulated as follows. Its activity is inhibited by Trichostatin A (TSA), a known histone deacetylase inhibitor. Responsible for the deacetylation of lysine residues on the N-terminal part of the core histones (H2A, H2B, H3 and H4). Histone deacetylation gives a tag for epigenetic repression and plays an important role in transcriptional regulation, cell cycle progression and developmental events. Histone deacetylases act via the formation of large multiprotein complexes. Involved in muscle maturation by repressing transcription of myocyte enhancer factors such as MEF2A, MEF2B and MEF2C. During muscle differentiation, it shuttles into the cytoplasm, allowing the expression of myocyte enhancer factors. Positively regulates the transcriptional repressor activity of FOXP3. Serves as a corepressor of RARA, causing its deacetylation and inhibition of RARE DNA element binding. In association with RARA, plays a role in the repression of microRNA-10a and thereby in the inflammatory response. Also acetylates non-histone proteins, such as ALKBH5. This is Histone deacetylase 7 (Hdac7) from Mus musculus (Mouse).